We begin with the raw amino-acid sequence, 157 residues long: Protein Smg (157 aa).

This sequence belongs to the Smg family.

This Enterobacter sp. (strain 638) protein is Protein Smg.